The sequence spans 346 residues: Envelope glycoprotein M (346 aa).

The Intravirion segment spans residues 1-12 (MALSRVDVINMR). A helical membrane pass occupies residues 13 to 33 (IWVLSIICACLTYVNVTVHLV). Residues 34–76 (AVHFPNLGFPCAYYEINDMKAINLSIRNDIRSLTPQLYLNPIQ) lie on the Virion surface side of the membrane. The chain crosses the membrane as a helical span at residues 77–97 (LICYVVFMDICFFFILVYYIV). At 98 to 117 (CCVKVFSSEKTPNINQSTRD) the chain is on the intravirion side. The helical transmembrane segment at 118–140 (ITWMGDSLSCFQFVLTMDTYQFF) threads the bilayer. The Virion surface segment spans residues 141–147 (VTCLSFR). The helical transmembrane segment at 148 to 168 (LVTLAAFTYCLFFICFTAFTL) threads the bilayer. At 169–199 (TMITQYQSSERSFFVLKRIHPKLKGTIKYKT) the chain is on the intravirion side. Residues 200–220 (IIINMIELMLGFSSMVFAITI) form a helical membrane-spanning segment. Residues 221–236 (CLGLGNNFYIKSSTVA) are Virion surface-facing. A helical transmembrane segment spans residues 237–257 (FASINTFFVMSFVYSLVIELI). Residues 258 to 263 (LHQYVK) lie on the Intravirion side of the membrane. The chain crosses the membrane as a helical span at residues 264-284 (VQFGLHFGILFGILGLTYPIL). Residues 285-293 (KYDSLFKTE) lie on the Virion surface side of the membrane. A helical membrane pass occupies residues 294–314 (WTVKFIVNLAVITIVCLSFII). The Intravirion portion of the chain corresponds to 315-346 (CRLIRFFMRKHHNYKKLPTTVEDLDVLEEANE).

The protein belongs to the herpesviridae glycoprotein M family. Interacts (via N-terminus) with gN (via N-terminus). The gM-gN heterodimer forms the gCII complex.

The protein resides in the virion membrane. It is found in the host Golgi apparatus. The protein localises to the host trans-Golgi network. Its subcellular location is the host endosome membrane. It localises to the host nucleus inner membrane. Its function is as follows. Envelope glycoprotein important for virion assembly and egress. Plays a role in the correct incorporation of gH-gL into virion membrane. Directs the glycoprotein N (gN) to the host trans-Golgi network. The polypeptide is Envelope glycoprotein M (Homo sapiens (Human)).